We begin with the raw amino-acid sequence, 253 residues long: Probable U3 small nucleolar RNA-associated protein 11 (253 aa).

The tract at residues 1–21 (MAAAFRKAVKSRQREYRERSQ) is disordered. Glycyl lysine isopeptide (Lys-Gly) (interchain with G-Cter in SUMO2) cross-links involve residues Lys74, Lys83, and Lys86. Residue Thr90 is modified to Phosphothreonine. Glycyl lysine isopeptide (Lys-Gly) (interchain with G-Cter in SUMO2) cross-links involve residues Lys103, Lys120, Lys143, Lys144, Lys180, Lys211, Lys218, Lys235, and Lys236. A Phosphoserine modification is found at Ser241. A Glycyl lysine isopeptide (Lys-Gly) (interchain with G-Cter in SUMO2) cross-link involves residue Lys246.

It belongs to the UTP11 family. As to quaternary structure, part of the small subunit (SSU) processome, composed of more than 70 proteins and the RNA chaperone small nucleolar RNA (snoRNA) U3.

It localises to the nucleus. It is found in the nucleolus. Its function is as follows. Part of the small subunit (SSU) processome, first precursor of the small eukaryotic ribosomal subunit. During the assembly of the SSU processome in the nucleolus, many ribosome biogenesis factors, an RNA chaperone and ribosomal proteins associate with the nascent pre-rRNA and work in concert to generate RNA folding, modifications, rearrangements and cleavage as well as targeted degradation of pre-ribosomal RNA by the RNA exosome. Involved in nucleolar processing of pre-18S ribosomal RNA. This is Probable U3 small nucleolar RNA-associated protein 11 from Rattus norvegicus (Rat).